Here is a 428-residue protein sequence, read N- to C-terminus: C4-dicarboxylate transport protein (428 aa).

9 helical membrane passes run 7-27 (SLYFWVLVAIALGVILGIVAP), 40-60 (FIKLIKMVIAPIIFCTVVLGI), 75-95 (LALLYFEVVSTVSLILGLLIV), 143-163 (AFARGEILQVLLLAVLFGIAL), 196-216 (PIGAFGAMAFTIGAYGIGSLF), 221-241 (LMATFYLTCLCFIFLVLGAIA), 306-326 (IYLTMAAVFVAQATNSAMTLG), 329-349 (FTLLAVLLLMSKGAAGVTGSG), and 351-371 (IVLAATLSAIGKVPVGGLALI).

It belongs to the dicarboxylate/amino acid:cation symporter (DAACS) (TC 2.A.23) family.

It localises to the cell inner membrane. Its function is as follows. Responsible for the transport of dicarboxylates such as succinate, fumarate, and malate from the periplasm across the membrane. This Solibacter usitatus (strain Ellin6076) protein is C4-dicarboxylate transport protein.